Here is a 241-residue protein sequence, read N- to C-terminus: MISVRRGFSQLWYWGKRGVIGIIALWMAGILIFAFLPVPFSMVMIERQLGAWLTGDFAYVAHSDWVPMDEISPYMVLAVMAAEDQKFPDHWGFDVGAIESALSHNQRNQKRIRGASTLSQQTAKNVFLWDGRSWVRKGLEVGLTAGIELIWTKRRILTVYLNIAEFGNGIFGVEAAARHFFNKPASKLSASEAALLAAVLPNPLRFKVNAPSGYVISRQQWILRQMHQLGGKTFLQENTLD.

A helical transmembrane segment spans residues 18–38; it reads GVIGIIALWMAGILIFAFLPV.

Belongs to the glycosyltransferase 51 family.

The protein localises to the cell inner membrane. It catalyses the reaction [GlcNAc-(1-&gt;4)-Mur2Ac(oyl-L-Ala-gamma-D-Glu-L-Lys-D-Ala-D-Ala)](n)-di-trans,octa-cis-undecaprenyl diphosphate + beta-D-GlcNAc-(1-&gt;4)-Mur2Ac(oyl-L-Ala-gamma-D-Glu-L-Lys-D-Ala-D-Ala)-di-trans,octa-cis-undecaprenyl diphosphate = [GlcNAc-(1-&gt;4)-Mur2Ac(oyl-L-Ala-gamma-D-Glu-L-Lys-D-Ala-D-Ala)](n+1)-di-trans,octa-cis-undecaprenyl diphosphate + di-trans,octa-cis-undecaprenyl diphosphate + H(+). It functions in the pathway cell wall biogenesis; peptidoglycan biosynthesis. Functionally, peptidoglycan polymerase that catalyzes glycan chain elongation from lipid-linked precursors. This Yersinia pseudotuberculosis serotype O:1b (strain IP 31758) protein is Biosynthetic peptidoglycan transglycosylase.